We begin with the raw amino-acid sequence, 287 residues long: 33 kDa chaperonin (287 aa).

2 cysteine pairs are disulfide-bonded: cysteine 233–cysteine 235 and cysteine 266–cysteine 269.

This sequence belongs to the HSP33 family. In terms of processing, under oxidizing conditions two disulfide bonds are formed involving the reactive cysteines. Under reducing conditions zinc is bound to the reactive cysteines and the protein is inactive.

The protein resides in the cytoplasm. Redox regulated molecular chaperone. Protects both thermally unfolding and oxidatively damaged proteins from irreversible aggregation. Plays an important role in the bacterial defense system toward oxidative stress. This Thermodesulfovibrio yellowstonii (strain ATCC 51303 / DSM 11347 / YP87) protein is 33 kDa chaperonin.